We begin with the raw amino-acid sequence, 239 residues long: Ribosomal RNA small subunit methyltransferase A (239 aa).

Residues Asn23, Ile25, Gly50, Glu72, Asp97, and Asn116 each coordinate S-adenosyl-L-methionine.

It belongs to the class I-like SAM-binding methyltransferase superfamily. rRNA adenine N(6)-methyltransferase family. RsmA subfamily.

The protein resides in the cytoplasm. It catalyses the reaction adenosine(1518)/adenosine(1519) in 16S rRNA + 4 S-adenosyl-L-methionine = N(6)-dimethyladenosine(1518)/N(6)-dimethyladenosine(1519) in 16S rRNA + 4 S-adenosyl-L-homocysteine + 4 H(+). In terms of biological role, specifically dimethylates two adjacent adenosines (A1518 and A1519) in the loop of a conserved hairpin near the 3'-end of 16S rRNA in the 30S particle. May play a critical role in biogenesis of 30S subunits. This is Ribosomal RNA small subunit methyltransferase A from Rickettsia felis (strain ATCC VR-1525 / URRWXCal2) (Rickettsia azadi).